Reading from the N-terminus, the 828-residue chain is G-type lectin S-receptor-like serine/threonine-protein kinase At2g19130 (828 aa).

Positions 1–22 (MVSFLTLTSFFFICFFIHGSSA) are cleaved as a signal peptide. Residues 23–146 (VDTISGDFTL…GSSLSANVLW (124 aa)) enclose the Bulb-type lectin domain. Residues 23–439 (VDTISGDFTL…GASGKSNNKG (417 aa)) are Extracellular-facing. 6 N-linked (GlcNAc...) asparagine glycosylation sites follow: N85, N113, N203, N234, N240, and N255. Residues 286-322 (PRQQCQVYRYCGSFGICSDKSEPFCRCPQGFRPMSQK) form the EGF-like domain. 4 cysteine pairs are disulfide-bonded: C290–C302, C296–C310, C372–C394, and C376–C382. The 82-residue stretch at 341-422 (CSRGDINQFF…EGNIFYLRLA (82 aa)) folds into the PAN domain. A helical membrane pass occupies residues 440–460 (LIFGAVLGSLGVIVLVLLVVI). Over 461–828 (LILRYRRRKR…KKMTNDNSSA (368 aa)) the chain is Cytoplasmic. The 278-residue stretch at 493-770 (KNFSDKLGGG…QVVQILEGVL (278 aa)) folds into the Protein kinase domain. ATP contacts are provided by residues 499–507 (LGGGGFGSV) and K521. Residue S527 is modified to Phosphoserine. The tract at residues 582–600 (VEEKIVLGWKLRFQIALGT) is caM-binding. D619 acts as the Proton acceptor in catalysis. T653 is subject to Phosphothreonine. A disordered region spans residues 796 to 828 (ESSSSSSHNSSQNHKHSSSSSSSKKMTNDNSSA). Residues 797-828 (SSSSSSHNSSQNHKHSSSSSSSKKMTNDNSSA) show a composition bias toward low complexity. S815 is subject to Phosphoserine.

Belongs to the protein kinase superfamily. Ser/Thr protein kinase family.

It is found in the cell membrane. The enzyme catalyses L-seryl-[protein] + ATP = O-phospho-L-seryl-[protein] + ADP + H(+). The catalysed reaction is L-threonyl-[protein] + ATP = O-phospho-L-threonyl-[protein] + ADP + H(+). The polypeptide is G-type lectin S-receptor-like serine/threonine-protein kinase At2g19130 (Arabidopsis thaliana (Mouse-ear cress)).